A 748-amino-acid polypeptide reads, in one-letter code: Cysteine--tRNA ligase, cytoplasmic (748 aa).

The interval 1-25 (MADSSGQQGKGRRVQPQWSPPAGTQ) is disordered. Ala2 carries the N-acetylalanine modification. A Phosphoserine modification is found at Ser19. Cys55 is a binding site for Zn(2+). Gly56 serves as a coordination point for L-cysteine. Positions 57–67 (PTVYDASHMGH) match the 'HIGH' region motif. At Arg79 the chain carries Phosphoserine. Thr96 provides a ligand contact to L-cysteine. The short motif at 101-104 (KIIK) is the 'KIIK' region element. Phosphoserine occurs at positions 305 and 307. Residues Cys348, His373, and Glu377 each coordinate Zn(2+). Residue His373 participates in L-cysteine binding. A 'KMSKS' region motif is present at residues 406-410 (KMSKS). Lys409 provides a ligand contact to ATP. An N6-acetyllysine modification is found at Lys503. Positions 653–679 (EKRRVEEEKRKKKEEAARRKQEQEAAK) are enriched in basic and acidic residues. The disordered stretch occupies residues 653–686 (EKRRVEEEKRKKKEEAARRKQEQEAAKLAKMKIP). The residue at position 746 (Ser746) is a Phosphoserine.

The protein belongs to the class-I aminoacyl-tRNA synthetase family. Homodimer. Requires Zn(2+) as cofactor.

The protein resides in the cytoplasm. It carries out the reaction tRNA(Cys) + L-cysteine + ATP = L-cysteinyl-tRNA(Cys) + AMP + diphosphate. Catalyzes the ATP-dependent ligation of cysteine to tRNA(Cys). The polypeptide is Cysteine--tRNA ligase, cytoplasmic (Homo sapiens (Human)).